The following is a 375-amino-acid chain: tRNA-specific 2-thiouridylase MnmA (375 aa).

ATP contacts are provided by residues 16 to 23 (GMSGGVDS) and Met42. The interaction with target base in tRNA stretch occupies residues 102–104 (NPD). Cys107 serves as the catalytic Nucleophile. Cys107 and Cys203 are disulfide-bonded. Residue Gly131 participates in ATP binding. The segment at 153–155 (KDQ) is interaction with tRNA. Cys203 acts as the Cysteine persulfide intermediate in catalysis. Residues 315–316 (RY) form an interaction with tRNA region.

This sequence belongs to the MnmA/TRMU family.

The protein localises to the cytoplasm. The enzyme catalyses S-sulfanyl-L-cysteinyl-[protein] + uridine(34) in tRNA + AH2 + ATP = 2-thiouridine(34) in tRNA + L-cysteinyl-[protein] + A + AMP + diphosphate + H(+). In terms of biological role, catalyzes the 2-thiolation of uridine at the wobble position (U34) of tRNA, leading to the formation of s(2)U34. The chain is tRNA-specific 2-thiouridylase MnmA from Pseudomonas paraeruginosa (strain DSM 24068 / PA7) (Pseudomonas aeruginosa (strain PA7)).